Here is a 102-residue protein sequence, read N- to C-terminus: Protein transport protein sec61 subunit beta (102 aa).

Polar residues predominate over residues 1–15; it reads MSSTKASGSVKNSAA. The interval 1 to 53 is disordered; sequence MSSTKASGSVKNSAASAPGGPKSQIRRRAAVEKNTKESNSGPAGARAAGAPGS. Topologically, residues 1 to 72 are cytoplasmic; that stretch reads MSSTKASGSV…DEASGFKVDP (72 aa). The span at 41 to 52 shows a compositional bias: low complexity; sequence GPAGARAAGAPG. The chain crosses the membrane as a helical span at residues 73–93; it reads VVVMVLSVGFIASVFLLHIVA.

The protein belongs to the SEC61-beta family. As to quaternary structure, heterotrimeric complex composed of SEC61, SBH1 and SSS1.

It is found in the endoplasmic reticulum membrane. Functionally, necessary for protein translocation in the endoplasmic reticulum. The protein is Protein transport protein sec61 subunit beta (sbh1) of Schizosaccharomyces pombe (strain 972 / ATCC 24843) (Fission yeast).